The following is a 400-amino-acid chain: ATP phosphoribosyltransferase regulatory subunit (400 aa).

It belongs to the class-II aminoacyl-tRNA synthetase family. HisZ subfamily. Heteromultimer composed of HisG and HisZ subunits.

Its subcellular location is the cytoplasm. The protein operates within amino-acid biosynthesis; L-histidine biosynthesis; L-histidine from 5-phospho-alpha-D-ribose 1-diphosphate: step 1/9. Required for the first step of histidine biosynthesis. May allow the feedback regulation of ATP phosphoribosyltransferase activity by histidine. In Hahella chejuensis (strain KCTC 2396), this protein is ATP phosphoribosyltransferase regulatory subunit.